A 285-amino-acid chain; its full sequence is HTH-type transcriptional regulator MurR (285 aa).

Residues M1–S77 form the HTH rpiR-type domain. The H-T-H motif DNA-binding region spans S37 to Q56. Positions I128 to V268 constitute an SIS domain.

As to quaternary structure, homotetramer.

The protein operates within amino-sugar metabolism; N-acetylmuramate degradation [regulation]. Represses the expression of the murPQ operon involved in the uptake and degradation of N-acetylmuramic acid (MurNAc). Binds to two adjacent inverted repeats within the operator region. MurNAc 6-phosphate, the substrate of MurQ, is the specific inducer that weakens binding of MurR to the operator. In Escherichia coli O17:K52:H18 (strain UMN026 / ExPEC), this protein is HTH-type transcriptional regulator MurR.